The following is a 375-amino-acid chain: Anhydro-N-acetylmuramic acid kinase (375 aa).

14-21 lines the ATP pocket; it reads GTSMDGAD.

Belongs to the anhydro-N-acetylmuramic acid kinase family.

It catalyses the reaction 1,6-anhydro-N-acetyl-beta-muramate + ATP + H2O = N-acetyl-D-muramate 6-phosphate + ADP + H(+). Its pathway is amino-sugar metabolism; 1,6-anhydro-N-acetylmuramate degradation. The protein operates within cell wall biogenesis; peptidoglycan recycling. Its function is as follows. Catalyzes the specific phosphorylation of 1,6-anhydro-N-acetylmuramic acid (anhMurNAc) with the simultaneous cleavage of the 1,6-anhydro ring, generating MurNAc-6-P. Is required for the utilization of anhMurNAc either imported from the medium or derived from its own cell wall murein, and thus plays a role in cell wall recycling. This Cupriavidus pinatubonensis (strain JMP 134 / LMG 1197) (Cupriavidus necator (strain JMP 134)) protein is Anhydro-N-acetylmuramic acid kinase.